Consider the following 374-residue polypeptide: MKKSIFFVPVLVLFFFGSRFSRVASAGDQRALAASFVFGDSLVDAGNNNYLQTLSRANSPPNGIDFKPSRGNPTGRFTNGRTIADIVGEKLGQQSYAVPYLAPNASGEALLNGVNYASGGGGILNATGSVFVNRLGMDIQVDYFTNTRKQFDKLLGQDKARDYIRKRSLFSVVIGSNDFLNNYLVPFVAAQARLTQTPETFVDDMISHLRNQLKRLYDMDARKFVVGNVAPIGCIPYQKSINQLNDKQCVDLANKLAIQYNARLKDLLTVELKDSLKDAHFVYANVYDLFMDLIVNFKDYGFRTASEACCETRGRLAGILPCGPTSSLCTDRSKHVFWDAYHPTEAANLLIADKLLYGDSKFVTPFNLLHLRDL.

The signal sequence occupies residues 1–26 (MKKSIFFVPVLVLFFFGSRFSRVASA). Serine 41 acts as the Nucleophile in catalysis. N-linked (GlcNAc...) asparagine glycans are attached at residues asparagine 104 and asparagine 125. Catalysis depends on residues aspartate 339 and histidine 342.

This sequence belongs to the 'GDSL' lipolytic enzyme family.

The protein resides in the secreted. The protein is GDSL esterase/lipase At3g50400 of Arabidopsis thaliana (Mouse-ear cress).